A 704-amino-acid polypeptide reads, in one-letter code: Protein NPG1 (704 aa).

8 TPR repeats span residues N24–F57, E58–I90, S177–L210, I309–P342, P430–S463, F555–S588, A589–S622, and R662–D695.

As to quaternary structure, interacts with calmodulin in a calcium-dependent manner. Expressed only in pollen and in pollen tubes.

Functionally, calmodulin-binding protein essential for pollen germination, but not necessary for microsporogenesis or gametogenesis. The polypeptide is Protein NPG1 (Arabidopsis thaliana (Mouse-ear cress)).